We begin with the raw amino-acid sequence, 78 residues long: Acyl carrier protein (78 aa).

The Carrier domain maps to 2–77; sequence SDIEQRVKQA…SAIDYVTKKL (76 aa). Position 37 is an O-(pantetheine 4'-phosphoryl)serine (S37).

It belongs to the acyl carrier protein (ACP) family. Post-translationally, 4'-phosphopantetheine is transferred from CoA to a specific serine of apo-ACP by AcpS. This modification is essential for activity because fatty acids are bound in thioester linkage to the sulfhydryl of the prosthetic group.

It localises to the cytoplasm. The protein operates within lipid metabolism; fatty acid biosynthesis. In terms of biological role, carrier of the growing fatty acid chain in fatty acid biosynthesis. The sequence is that of Acyl carrier protein from Acinetobacter baumannii (strain AB307-0294).